The primary structure comprises 292 residues: NAD kinase (292 aa).

Asp-73 acts as the Proton acceptor in catalysis. Residues 73 to 74, 147 to 148, His-158, Arg-175, Asp-177, 188 to 193, and Gln-247 contribute to the NAD(+) site; these read DG, NE, and TAYSLS.

This sequence belongs to the NAD kinase family. A divalent metal cation is required as a cofactor.

Its subcellular location is the cytoplasm. It carries out the reaction NAD(+) + ATP = ADP + NADP(+) + H(+). In terms of biological role, involved in the regulation of the intracellular balance of NAD and NADP, and is a key enzyme in the biosynthesis of NADP. Catalyzes specifically the phosphorylation on 2'-hydroxyl of the adenosine moiety of NAD to yield NADP. In Escherichia coli O7:K1 (strain IAI39 / ExPEC), this protein is NAD kinase.